Reading from the N-terminus, the 413-residue chain is Dolichyl-diphosphooligosaccharide--protein glycosyltransferase 48 kDa subunit (413 aa).

Residues 1–383 (GPRSLVLLEN…QYERFIPSAY (383 aa)) lie on the Lumenal side of the membrane. A helical transmembrane segment spans residues 384–404 (PYYAGAFSMMVGLFMFSIVFL). Residues 405–413 (HMKEKEKSD) are Cytoplasmic-facing.

Belongs to the DDOST 48 kDa subunit family. In terms of assembly, component of the oligosaccharyltransferase (OST) complex.

The protein localises to the endoplasmic reticulum. It localises to the endoplasmic reticulum membrane. Its pathway is protein modification; protein glycosylation. Subunit of the oligosaccharyl transferase (OST) complex that catalyzes the initial transfer of a defined glycan (Glc(3)Man(9)GlcNAc(2) in eukaryotes) from the lipid carrier dolichol-pyrophosphate to an asparagine residue within an Asn-X-Ser/Thr consensus motif in nascent polypeptide chains, the first step in protein N-glycosylation. N-glycosylation occurs cotranslationally and the complex associates with the Sec61 complex at the channel-forming translocon complex that mediates protein translocation across the endoplasmic reticulum (ER). All subunits are required for a maximal enzyme activity. Required for the assembly of both SST3A- and SS3B-containing OST complexes. The chain is Dolichyl-diphosphooligosaccharide--protein glycosyltransferase 48 kDa subunit from Gallus gallus (Chicken).